A 200-amino-acid chain; its full sequence is Superoxide dismutase [Mn] 2 (200 aa).

Residues His-28, His-76, Asp-158, and His-162 each coordinate Mn(2+).

Belongs to the iron/manganese superoxide dismutase family. The cofactor is Mn(2+).

It catalyses the reaction 2 superoxide + 2 H(+) = H2O2 + O2. Functionally, destroys superoxide anion radicals which are normally produced within the cells and which are toxic to biological systems. The protein is Superoxide dismutase [Mn] 2 (sod2) of Halobacterium salinarum (strain ATCC 700922 / JCM 11081 / NRC-1) (Halobacterium halobium).